Consider the following 263-residue polypeptide: Phosphate import ATP-binding protein PstB (263 aa).

The region spanning 17–258 (ISVKNLDFFY…PKRKETEDYI (242 aa)) is the ABC transporter domain. Position 49–56 (49–56 (GPSGCGKS)) interacts with ATP.

The protein belongs to the ABC transporter superfamily. Phosphate importer (TC 3.A.1.7) family. The complex is composed of two ATP-binding proteins (PstB), two transmembrane proteins (PstC and PstA) and a solute-binding protein (PstS).

It is found in the cell inner membrane. The catalysed reaction is phosphate(out) + ATP + H2O = ADP + 2 phosphate(in) + H(+). Part of the ABC transporter complex PstSACB involved in phosphate import. Responsible for energy coupling to the transport system. This Polaromonas sp. (strain JS666 / ATCC BAA-500) protein is Phosphate import ATP-binding protein PstB.